Reading from the N-terminus, the 478-residue chain is Cysteine protease ATG4B (478 aa).

Residues 1-15 (MTSLPDRGVSSSSSD) show a composition bias toward polar residues. The interval 1 to 20 (MTSLPDRGVSSSSSDPLCEG) is disordered. Catalysis depends on Cys-164, which acts as the Nucleophile. Catalysis depends on residues Asp-361 and His-363.

This sequence belongs to the peptidase C54 family. Interacts with ATG8. Constitutively expressed.

It is found in the cytoplasm. It catalyses the reaction [protein]-C-terminal L-amino acid-glycyl-phosphatidylethanolamide + H2O = [protein]-C-terminal L-amino acid-glycine + a 1,2-diacyl-sn-glycero-3-phosphoethanolamine. Functionally, cysteine protease that plays a key role in autophagy by mediating both proteolytic activation and delipidation of ATG8 family proteins. The protease activity is required for proteolytic activation of ATG8 family proteins: cleaves the C-terminal amino acid of ATG8 proteins to reveal a C-terminal glycine. Exposure of the glycine at the C-terminus is essential for ATG8 proteins conjugation to phosphatidylethanolamine (PE) and insertion to membranes, which is necessary for autophagy. In addition to the protease activity, also mediates delipidation of PE-conjugated ATG8 proteins. In Oryza sativa subsp. indica (Rice), this protein is Cysteine protease ATG4B (ATG4B).